Consider the following 285-residue polypeptide: Gas vesicle protein C2 (285 aa).

A run of 6 repeats spans residues 22–52 (EAMD…RDMR), 53–84 (AAVD…EATA), 85–122 (AAFD…RAVT), 123–155 (TDFE…TAKQ), 156–188 (EGFE…DDTA), and 189–220 (ASFA…QTDV). Residues 22–220 (EAMDAYAEEF…ADDTTAQTDV (199 aa)) are 6 X approximate tandem repeats.

It belongs to the halobacterial gas vesicle GvpC family.

Its subcellular location is the gas vesicle. Functionally, confers stability, involved in shaping gas vesicles (GV), hollow, gas filled proteinaceous nanostructures. GVs allow positioning of halobacteria at an optimal depth for growth in the poorly aerated, shallow brine pools of their habitat. Expression of 2 c-vac DNA fragments containing 2 divergently transcribed regions (gvpE-gvpF-gvpG-gvpH-gvpI-gvpJ-gvpK-gvpL-gvpM and gvpA-gvpC-gvpN-gvpO) allows H.volcanii to produce gas vesicles. The sequence is that of Gas vesicle protein C2 from Halobacterium salinarum (strain ATCC 700922 / JCM 11081 / NRC-1) (Halobacterium halobium).